Here is a 313-residue protein sequence, read N- to C-terminus: Acetaldehyde dehydrogenase 1 (313 aa).

NAD(+) is bound at residue 16–19 (SGNI). The active-site Acyl-thioester intermediate is the Cys131. Residues 162–170 (SAGPGTRAN) and Asn281 each bind NAD(+).

The protein belongs to the acetaldehyde dehydrogenase family.

It carries out the reaction acetaldehyde + NAD(+) + CoA = acetyl-CoA + NADH + H(+). This chain is Acetaldehyde dehydrogenase 1, found in Mycobacterium sp. (strain JLS).